A 223-amino-acid chain; its full sequence is MQLERLQKKLSYQFTNLDYLLQALTHRSAGAKNNERLEFLGDSILNFAIGKALFEKFPKANEGELSRMRATLVREQTLAILARQFGLGEYMRLGAGELKSGGYRRESILSDCVEAIIAAIYLDAGMDKAIEQVHLWYQDLLAEMKPGDAQKDPKTRLQEFLQGRKLPLPTYEVLDIKGEAHNQTFKVTCKIEMLEEIFIGIGTSRRKAEQNAAEQVLAKLTTK.

Positions 3-125 (LERLQKKLSY…IIAAIYLDAG (123 aa)) constitute an RNase III domain. Glutamate 38 serves as a coordination point for Mg(2+). The active site involves aspartate 42. Mg(2+)-binding residues include aspartate 111 and glutamate 114. Residue glutamate 114 is part of the active site. Positions 152–222 (DPKTRLQEFL…AEQVLAKLTT (71 aa)) constitute a DRBM domain.

This sequence belongs to the ribonuclease III family. In terms of assembly, homodimer. Mg(2+) serves as cofactor.

Its subcellular location is the cytoplasm. It catalyses the reaction Endonucleolytic cleavage to 5'-phosphomonoester.. In terms of biological role, digests double-stranded RNA. Involved in the processing of primary rRNA transcript to yield the immediate precursors to the large and small rRNAs (23S and 16S). Processes some mRNAs, and tRNAs when they are encoded in the rRNA operon. Processes pre-crRNA and tracrRNA of type II CRISPR loci if present in the organism. This chain is Ribonuclease 3, found in Actinobacillus pleuropneumoniae serotype 5b (strain L20).